Reading from the N-terminus, the 381-residue chain is Alkanesulfonate monooxygenase (381 aa).

Belongs to the SsuD family. In terms of assembly, homotetramer.

It carries out the reaction an alkanesulfonate + FMNH2 + O2 = an aldehyde + FMN + sulfite + H2O + 2 H(+). Its function is as follows. Catalyzes the desulfonation of aliphatic sulfonates. The polypeptide is Alkanesulfonate monooxygenase (Escherichia coli (strain SE11)).